The following is a 360-amino-acid chain: Cytokine receptor-like factor 2 (360 aa).

An N-terminal signal peptide occupies residues 1 to 18; it reads MRAVTWAIVAMLLPRVLG. Over 27–238 the chain is Extracellular; it reads TGGVGDTLSV…PRTPGTPTPP (212 aa). An N-linked (GlcNAc...) asparagine glycan is attached at asparagine 62. Cysteine 77 and cysteine 90 are oxidised to a cystine. Residues 123–214 form the Fibronectin type-III domain; it reads RPRPPWNVTL…PSKWTGVASL (92 aa). N-linked (GlcNAc...) asparagine glycosylation is found at asparagine 129 and asparagine 174. A disulfide bridge connects residues cysteine 185 and cysteine 223. The WSXWS motif motif lies at 205-209; that stretch reads PSKWT. Residues 239–259 traverse the membrane as a helical segment; the sequence is LALACGLAVALLTLVLLLALL. The Cytoplasmic segment spans residues 260-360; sequence RMRRVKEALL…LMGDSGYTTL (101 aa). Residues 268 to 276 carry the Box 1 motif motif; sequence LLPGVPDPR.

Belongs to the type I cytokine receptor family. Type 5 subfamily. Heterodimer of CRLF2 and IL7R. In terms of tissue distribution, expressed in all tissues examined including brain, thymus, lung, heart, muscle, stomach, small intestine, liver, kidney, spleen, testis and skin. Highest levels in thymus, liver and testis.

The protein localises to the membrane. Functionally, receptor for thymic stromal lymphopoietin (TSLP). Forms a functional complex with TSLP and IL7R which is capable of stimulating cell proliferation through activation of STAT3 and STAT5. Also activates JAK2. Implicated in the development of the hematopoietic system. In Rattus norvegicus (Rat), this protein is Cytokine receptor-like factor 2 (Crlf2).